The primary structure comprises 1341 residues: Aldehyde oxidase 4 (1341 aa).

Residues 8–95 enclose the 2Fe-2S ferredoxin-type domain; sequence DELIFFVNGK…GAAVTTVEGV (88 aa). Residues Cys47, Cys52, Cys55, and Cys77 each contribute to the [2Fe-2S] cluster site. Gln116 lines the Mo-molybdopterin pocket. Positions 117, 120, 152, and 154 each coordinate [2Fe-2S] cluster. Residue Cys154 participates in Mo-molybdopterin binding. The 186-residue stretch at 239-424 folds into the FAD-binding PCMH-type domain; that stretch reads FQGERTTWLA…LSVFIPYSSQ (186 aa). Residues 267–274, Ala348, Thr357, His361, Asp370, and Val414 each bind FAD; that span reads LIMGNTTV. Mo-molybdopterin-binding positions include Ala805, 805–806, Leu1046, 1087–1090, Gln1202, and Leu1266; these read AF and GSMG. Catalysis depends on Glu1268, which acts as the Proton acceptor; for azaheterocycle hydroxylase activity.

It belongs to the xanthine dehydrogenase family. Homodimer. The cofactor is [2Fe-2S] cluster. Requires FAD as cofactor. It depends on Mo-molybdopterin as a cofactor. Detected in liver, testis, kidney, brain, Harderian gland and olfactory mucosa.

The protein localises to the cytoplasm. It carries out the reaction an aldehyde + O2 + H2O = a carboxylate + H2O2 + H(+). The enzyme catalyses retinal + O2 + H2O = retinoate + H2O2 + H(+). Its function is as follows. Aldehyde oxidase able to catalyze the oxidation of retinaldehyde into retinoate. Acts as a negative modulator of the epidermal trophism. May be able to oxidize a wide variety of aldehydes into their corresponding carboxylates and to hydroxylate azaheterocycles. The chain is Aldehyde oxidase 4 (AOX4) from Cavia porcellus (Guinea pig).